We begin with the raw amino-acid sequence, 458 residues long: Cysteine--tRNA ligase (458 aa).

Residue C27 participates in Zn(2+) binding. Residues 29 to 39 (ITPQSEPHIGH) carry the 'HIGH' region motif. C207, H232, and E236 together coordinate Zn(2+). The 'KMSKS' region signature appears at 265-269 (KMSKS). K268 is a binding site for ATP.

The protein belongs to the class-I aminoacyl-tRNA synthetase family. In terms of assembly, monomer. Zn(2+) is required as a cofactor.

Its subcellular location is the cytoplasm. It carries out the reaction tRNA(Cys) + L-cysteine + ATP = L-cysteinyl-tRNA(Cys) + AMP + diphosphate. This chain is Cysteine--tRNA ligase, found in Dehalococcoides mccartyi (strain ATCC BAA-2266 / KCTC 15142 / 195) (Dehalococcoides ethenogenes (strain 195)).